Consider the following 145-residue polypeptide: uncharacterized protein (145 aa).

The helical transmembrane segment at 1 to 21 threads the bilayer; that stretch reads MWFLVKATFWFSLVLVLLPFL. The segment at 109–145 is disordered; that stretch reads TPAESVPSAEATEKAEPAFKRMPVPEHRLDPGPASGK. Residues 119-138 are compositionally biased toward basic and acidic residues; sequence ATEKAEPAFKRMPVPEHRLD.

It is found in the membrane. This is an uncharacterized protein from Rhizobium meliloti (strain 1021) (Ensifer meliloti).